We begin with the raw amino-acid sequence, 212 residues long: Riboflavin kinase (212 aa).

The tract at residues 1–83 (MTELYCERKT…NLLRYFDIAS (83 aa)) is unknown. Residues 84–212 (IKLVGRVVTG…GDRVELEVYL (129 aa)) are riboflavin kinase. CDP is bound at residue 93–98 (GLGEGA). 2 residues coordinate Mg(2+): threonine 122 and asparagine 124. FMN-binding residues include threonine 179 and glutamate 187. 192–195 (VRVR) contributes to the CDP binding site.

It belongs to the archaeal riboflavin kinase family. Mg(2+) serves as cofactor.

The enzyme catalyses riboflavin + CTP = CDP + FMN + H(+). The protein operates within cofactor biosynthesis; FMN biosynthesis; FMN from riboflavin (CTP route): step 1/1. Its function is as follows. Catalyzes the CTP-dependent phosphorylation of riboflavin (vitamin B2) to form flavin mononucleotide (FMN). The chain is Riboflavin kinase (ribK) from Pyrobaculum calidifontis (strain DSM 21063 / JCM 11548 / VA1).